The sequence spans 253 residues: Acetylglutamate kinase (253 aa).

Residues 37–38 (GG), arginine 59, and asparagine 149 each bind substrate.

Belongs to the acetylglutamate kinase family. ArgB subfamily.

The protein resides in the cytoplasm. The catalysed reaction is N-acetyl-L-glutamate + ATP = N-acetyl-L-glutamyl 5-phosphate + ADP. Its pathway is amino-acid biosynthesis; L-arginine biosynthesis; N(2)-acetyl-L-ornithine from L-glutamate: step 2/4. In terms of biological role, catalyzes the ATP-dependent phosphorylation of N-acetyl-L-glutamate. This is Acetylglutamate kinase from Rubrobacter xylanophilus (strain DSM 9941 / JCM 11954 / NBRC 16129 / PRD-1).